The chain runs to 115 residues: Nitrogen regulatory protein P-II 2 (115 aa).

Tyrosine 54 carries the post-translational modification O-UMP-tyrosine.

This sequence belongs to the P(II) protein family.

Functionally, could be involved in the regulation of nitrogen fixation. This Methanothermobacter thermautotrophicus (strain ATCC 29096 / DSM 1053 / JCM 10044 / NBRC 100330 / Delta H) (Methanobacterium thermoautotrophicum) protein is Nitrogen regulatory protein P-II 2.